Here is a 114-residue protein sequence, read N- to C-terminus: FK506-binding protein 1 (114 aa).

In terms of domain architecture, PPIase FKBP-type spans 26–114 (GDLVTIHYTG…VFDVELLKIN (89 aa)).

Belongs to the FKBP-type PPIase family. FKBP1 subfamily.

It is found in the cytoplasm. The enzyme catalyses [protein]-peptidylproline (omega=180) = [protein]-peptidylproline (omega=0). Inhibited by both FK506 and rapamycin. Functionally, PPIases accelerate the folding of proteins. It catalyzes the cis-trans isomerization of proline imidic peptide bonds in oligopeptides. The protein is FK506-binding protein 1 (FPR1) of Kluyveromyces lactis (strain ATCC 8585 / CBS 2359 / DSM 70799 / NBRC 1267 / NRRL Y-1140 / WM37) (Yeast).